The sequence spans 301 residues: Protein phosphatase 1 regulatory subunit 3B (301 aa).

Positions 79-82 (RVSF) match the PP1-binding motif motif. A CBM21 domain is found at 142–250 (RNRLQAESVC…SNKGLNYRIV (109 aa)).

Interacts with glycogen, PPP1CC catalytic subunit of PP1 and PYGL. Associates with glycogen particles. Forms complexes with debranching enzyme, glycogen phosphorylase, glycogen synthase and phosphorylase kinase which is necessary for its regulation of PP1 activity.

In terms of biological role, acts as a glycogen-targeting subunit for phosphatase PP1. Facilitates interaction of the PP1 with enzymes of the glycogen metabolism and regulates its activity. Suppresses the rate at which PP1 dephosphorylates (inactivates) glycogen phosphorylase and enhances the rate at which it activates glycogen synthase and therefore limits glycogen breakdown. In Xenopus tropicalis (Western clawed frog), this protein is Protein phosphatase 1 regulatory subunit 3B (ppp1r3b).